Here is a 496-residue protein sequence, read N- to C-terminus: Cytochrome P450 71D181 (496 aa).

The chain crosses the membrane as a helical; Signal-anchor for type II membrane protein span at residues 1 to 21 (MDISILWVAIILVISSYFIFM). C435 is a binding site for heme. The segment at 471–496 (MSETPGLSGPRKNPLIMVPTIHNPTS) is disordered.

Belongs to the cytochrome P450 family. The cofactor is heme.

The protein resides in the membrane. It carries out the reaction gamma-terpinene + 2 reduced [NADPH--hemoprotein reductase] + 2 O2 = carvacrol + 2 oxidized [NADPH--hemoprotein reductase] + 3 H2O + 2 H(+). The enzyme catalyses (4S)-limonene + reduced [NADPH--hemoprotein reductase] + O2 = (1S,5R)-carveol + oxidized [NADPH--hemoprotein reductase] + H2O + H(+). The catalysed reaction is (4R)-limonene + reduced [NADPH--hemoprotein reductase] + O2 = (1R,5S)-carveol + oxidized [NADPH--hemoprotein reductase] + H2O + H(+). It catalyses the reaction alpha-terpinene + 2 reduced [NADPH--hemoprotein reductase] + 2 O2 = carvacrol + 2 oxidized [NADPH--hemoprotein reductase] + 3 H2O + 2 H(+). The protein operates within secondary metabolite biosynthesis; terpenoid biosynthesis. In terms of biological role, involved in the biosynthesis of phenolic monoterpenes natural products thymol and carvacrol which have a broad range of biological activities acting as antimicrobial compounds, insecticides, antioxidants and pharmaceutical agents. Catalyzes the C2-hydroxylation of gamma-terpinene and alpha-terpinene to produce carvacrol. Also mediates the C6-hydroxylation of (4S)-limonene and (4R)-limonene to form carveol. The protein is Cytochrome P450 71D181 of Thymus vulgaris (Thyme).